A 472-amino-acid polypeptide reads, in one-letter code: Aspartyl/glutamyl-tRNA(Asn/Gln) amidotransferase subunit B (472 aa).

Belongs to the GatB/GatE family. GatB subfamily. As to quaternary structure, heterotrimer of A, B and C subunits.

It carries out the reaction L-glutamyl-tRNA(Gln) + L-glutamine + ATP + H2O = L-glutaminyl-tRNA(Gln) + L-glutamate + ADP + phosphate + H(+). The catalysed reaction is L-aspartyl-tRNA(Asn) + L-glutamine + ATP + H2O = L-asparaginyl-tRNA(Asn) + L-glutamate + ADP + phosphate + 2 H(+). Allows the formation of correctly charged Asn-tRNA(Asn) or Gln-tRNA(Gln) through the transamidation of misacylated Asp-tRNA(Asn) or Glu-tRNA(Gln) in organisms which lack either or both of asparaginyl-tRNA or glutaminyl-tRNA synthetases. The reaction takes place in the presence of glutamine and ATP through an activated phospho-Asp-tRNA(Asn) or phospho-Glu-tRNA(Gln). The chain is Aspartyl/glutamyl-tRNA(Asn/Gln) amidotransferase subunit B from Campylobacter jejuni subsp. jejuni serotype O:23/36 (strain 81-176).